The following is a 350-amino-acid chain: Induced myeloid leukemia cell differentiation protein Mcl-1 homolog (350 aa).

Lysine 5 is covalently cross-linked (Glycyl lysine isopeptide (Lys-Gly) (interchain with G-Cter in ubiquitin)). A disordered region spans residues 23 to 95 (AGSGGASSSG…GPNVSATPPR (73 aa)). Residues 31–41 (SGGRLLASGRE) show a composition bias toward low complexity. Positions 50–61 (GGEAGAVIGGSA) are enriched in gly residues. Residues 104-175 (RASPPEEMEG…PAEEEEDELY (72 aa)) are PEST-like. Serine 121 carries the post-translational modification Phosphoserine. Residue lysine 136 forms a Glycyl lysine isopeptide (Lys-Gly) (interchain with G-Cter in ubiquitin) linkage. Residues 150–169 (ASSGPGMDGSLPSTPPPAEE) are disordered. Residue serine 159 is modified to Phosphoserine; by GSK3-alpha and GSK3-beta. Serine 162 carries the phosphoserine modification. Threonine 163 is subject to Phosphothreonine. Glycyl lysine isopeptide (Lys-Gly) (interchain with G-Cter in ubiquitin) cross-links involve residues lysine 194 and lysine 197. The BH3 motif lies at 209-223 (ALETLQRVGDGVQRN). Positions 252–272 (HVFSDGVTNWGRIVTLISFGA) match the BH1 motif. A BH2 motif is present at residues 304 to 319 (DWLVKQRGWDGFVEFF). The helical transmembrane segment at 327–349 (GIRNVLLAFAGVAGVGAGLAYLI) threads the bilayer.

It belongs to the Bcl-2 family. In terms of assembly, interacts with HIF3A (via C-terminus domain). Interacts with BOK, BIK, BAX, BAK1, and TPT1. Interacts with unphosphorylated BAD. Interacts with BMF, BBC3 and PMAIP1. Interacts with BOP. Interacts with BCL2L11; may sequester BCL2L11 to prevent its pro-apoptotic activity. Interacts with GIMAP5 and HSPA8/HSC70; the interaction between HSPA8 and MCL1 is impaired in the absence of GIMAP5. Post-translationally, cleaved by CASP3 during apoptosis, yielding a pro-apoptotic C-terminal fragment. In terms of processing, rapidly degraded in the absence of phosphorylation in the PEST region. Phosphorylated on Ser-159, by GSK3, in response to IL3/interleukin-3 withdrawal. Phosphorylation at Ser-159 induces ubiquitination and proteasomal degradation, abrogating the anti-apoptotic activity. Treatment with taxol or okadaic acid induces phosphorylation on additional sites. Post-translationally, ubiquitinated. Ubiquitination is induced by phosphorylation at Ser-159. Deubiquitinated by USP20; leading to increased stability. In terms of tissue distribution, detected in peripheral blood mononuclear cells and bone marrow.

Its subcellular location is the membrane. It localises to the cytoplasm. The protein resides in the mitochondrion. The protein localises to the nucleus. It is found in the nucleoplasm. Its function is as follows. Involved in the regulation of apoptosis versus cell survival, and in the maintenance of viability but not of proliferation. Mediates its effects by interactions with a number of other regulators of apoptosis. In Canis lupus familiaris (Dog), this protein is Induced myeloid leukemia cell differentiation protein Mcl-1 homolog (MCL1).